The primary structure comprises 1603 residues: Protein TIC 214 (1603 aa).

Helical transmembrane passes span 11–31 (VLWASILSWINISSPLILFGL), 58–78 (LSGTVAVSGLILGQLIIFLSI), 86–106 (LLLKPHTVTLLVLPYLLFYWY), 131–151 (IFFDSFIFQLLNPVLLPSPIL), 167–187 (LFVLSCFFGWLSGHLFFFNCI), and 213–233 (FSIFVLACILLYLGRAPVPFF).

The protein belongs to the TIC214 family. In terms of assembly, part of the Tic complex.

Its subcellular location is the plastid. It is found in the chloroplast inner membrane. Its function is as follows. Involved in protein precursor import into chloroplasts. May be part of an intermediate translocation complex acting as a protein-conducting channel at the inner envelope. This is Protein TIC 214 from Physcomitrium patens (Spreading-leaved earth moss).